A 452-amino-acid polypeptide reads, in one-letter code: UDP-N-acetylmuramoylalanine--D-glutamate ligase (452 aa).

119–125 (GSNGKTT) is an ATP binding site.

Belongs to the MurCDEF family.

The protein resides in the cytoplasm. The enzyme catalyses UDP-N-acetyl-alpha-D-muramoyl-L-alanine + D-glutamate + ATP = UDP-N-acetyl-alpha-D-muramoyl-L-alanyl-D-glutamate + ADP + phosphate + H(+). It participates in cell wall biogenesis; peptidoglycan biosynthesis. Functionally, cell wall formation. Catalyzes the addition of glutamate to the nucleotide precursor UDP-N-acetylmuramoyl-L-alanine (UMA). The protein is UDP-N-acetylmuramoylalanine--D-glutamate ligase of Streptococcus equi subsp. zooepidemicus (strain MGCS10565).